The sequence spans 334 residues: MLFNLKNRHLLSLVHHTPQEIQFLLQLAKELKQAKYTGTEQPRLKGKNIALIFEKTSTRTRCSFEVAAYDQGANVTYIDPNSSQIGHKESMKDTARVLGRMYDAIEYRGFKQAVVNELAEYAGVPVFNGLTDEFHPTQMLADVLTMMEHSDKPLSDIIYVYIGDARNNMGNSLLLIGAKLGMDVRICAPKALQPEAELVAMCQEFAQQTGARITITEDVELAVKGVDFVHTDVWVSMGEPLESWGERINLLLPYQVTPALMQRSGNPKVKFMHCLPAFHNCETEVGKKIAEKYPHLANGIEVTEEVFESPMNIAFDQAENRMHTIKAVMVASLA.

Carbamoyl phosphate is bound by residues Ser-57 to Thr-60, Gln-84, Arg-108, and His-135 to Gln-138. L-ornithine contacts are provided by residues Asn-168, Asp-232, and Ser-236 to Met-237. Carbamoyl phosphate contacts are provided by residues Cys-274–Leu-275 and Arg-321.

This sequence belongs to the aspartate/ornithine carbamoyltransferase superfamily. OTCase family.

It is found in the cytoplasm. It carries out the reaction carbamoyl phosphate + L-ornithine = L-citrulline + phosphate + H(+). It functions in the pathway amino-acid degradation; L-arginine degradation via ADI pathway; carbamoyl phosphate from L-arginine: step 2/2. Reversibly catalyzes the transfer of the carbamoyl group from carbamoyl phosphate (CP) to the N(epsilon) atom of ornithine (ORN) to produce L-citrulline. This Avibacterium paragallinarum (Haemophilus gallinarum) protein is Ornithine carbamoyltransferase, catabolic (arcB).